The primary structure comprises 417 residues: Arginine biosynthesis bifunctional protein ArgJ (417 aa).

Thr162, Lys188, Thr199, Glu289, Asn412, and Ser417 together coordinate substrate. The active-site Nucleophile is the Thr199.

Belongs to the ArgJ family. Heterotetramer of two alpha and two beta chains.

It is found in the cytoplasm. It carries out the reaction N(2)-acetyl-L-ornithine + L-glutamate = N-acetyl-L-glutamate + L-ornithine. The enzyme catalyses L-glutamate + acetyl-CoA = N-acetyl-L-glutamate + CoA + H(+). It functions in the pathway amino-acid biosynthesis; L-arginine biosynthesis; L-ornithine and N-acetyl-L-glutamate from L-glutamate and N(2)-acetyl-L-ornithine (cyclic): step 1/1. It participates in amino-acid biosynthesis; L-arginine biosynthesis; N(2)-acetyl-L-ornithine from L-glutamate: step 1/4. Catalyzes two activities which are involved in the cyclic version of arginine biosynthesis: the synthesis of N-acetylglutamate from glutamate and acetyl-CoA as the acetyl donor, and of ornithine by transacetylation between N(2)-acetylornithine and glutamate. This is Arginine biosynthesis bifunctional protein ArgJ from Nitrobacter winogradskyi (strain ATCC 25391 / DSM 10237 / CIP 104748 / NCIMB 11846 / Nb-255).